Consider the following 225-residue polypeptide: PKHD-type hydroxylase KPK_3192 (225 aa).

The region spanning 78–177 (TISAPLFNRY…RQASFLWIQS (100 aa)) is the Fe2OG dioxygenase domain. Fe cation is bound by residues histidine 96, aspartate 98, and histidine 158. Arginine 168 provides a ligand contact to 2-oxoglutarate.

Requires Fe(2+) as cofactor. The cofactor is L-ascorbate.

The sequence is that of PKHD-type hydroxylase KPK_3192 from Klebsiella pneumoniae (strain 342).